The sequence spans 199 residues: Cilia- and flagella-associated protein 20 (199 aa).

It belongs to the CFAP20 family. In terms of tissue distribution, expressed in spermatocytes and chordotonal organs in sensory neurons of the antenna.

The protein localises to the nucleus. It is found in the nucleolus. Its subcellular location is the cell projection. It localises to the cilium. The protein resides in the cytoplasm. The protein localises to the cytoskeleton. It is found in the microtubule organizing center. Its subcellular location is the centrosome. It localises to the centriole. The protein resides in the flagellum. The protein localises to the cilium axoneme. Its function is as follows. Cilium- and flagellum-specific protein that plays a role in axonemal structure organization and motility. Microtubule inner protein (MIP) part of the dynein-decorated doublet microtubules (DMTs) in cilia axoneme, which is required for motile cilia beating. Involved in the regulation of the size and morphology of cilia. Required for sperm individualization, differentiation of the sperm flagellum and tubulin polyglycylation of axonemal microtubules. In Drosophila melanogaster (Fruit fly), this protein is Cilia- and flagella-associated protein 20.